Consider the following 265-residue polypeptide: L-histidine 2-aminobutanoyltransferase (265 aa).

It belongs to the methyltransferase superfamily. CntL family.

The enzyme catalyses L-histidine + S-adenosyl-L-methionine = (2S)-2-amino-4-{[(1S)-1-carboxy-2-(1H-imidazol-4-yl)ethyl]amino}butanoate + S-methyl-5'-thioadenosine + H(+). Catalyzes the nucleophilic attack of one alpha-aminobutanoate moiety from SAM onto L-histidine to produce the intermediate (2S)-2-amino-4-{[(1S)-1-carboxy-2-(1H-imidazol-4-yl)ethyl]amino}butanoate. Functions in the biosynthesis of the metallophore yersinopine, which is involved in metal acquisition and thus enables bacterial growth inside the host, where metal access is limited. Therefore, this enzyme probably contributes to Yersinia virulence. The chain is L-histidine 2-aminobutanoyltransferase from Yersinia pestis.